The sequence spans 266 residues: Enterotoxin type C-1 (266 aa).

A signal peptide spans 1–27 (MNKSRFISCVILIFALILVLFTPNVLA). Cys-120 and Cys-137 are joined by a disulfide.

Belongs to the staphylococcal/streptococcal toxin family. Interacts with host MHC class II molecules composed of alpha/HLA-DRA and beta/HLA-DRB1 chains.

Its subcellular location is the secreted. Staphylococcal enterotoxin that activates the host immune system by binding as unprocessed molecules to major histocompatibility (MHC) complex class II and T-cell receptor (TCR) molecules. In turn, this ternary complex activates a large number of T-lymphocytes initiating a systemic release of pro-inflammatory cytokines. Inhibits SEC1-mediated T-cell activation in the absence of MHC class II by competing with SEC1 for binding to the host TCR. Also causes the intoxication staphylococcal food poisoning syndrome. The chain is Enterotoxin type C-1 (entC1) from Staphylococcus aureus.